Here is a 289-residue protein sequence, read N- to C-terminus: Acetyl-coenzyme A carboxylase carboxyl transferase subunit beta (289 aa).

The CoA carboxyltransferase N-terminal domain occupies 23–289 (HWIKCPSCSA…YDENPCLLHL (267 aa)). 4 residues coordinate Zn(2+): cysteine 27, cysteine 30, cysteine 46, and cysteine 49. The segment at 27–49 (CPSCSALMYYKEVIAQHHVCPKC) adopts a C4-type zinc-finger fold.

Belongs to the AccD/PCCB family. As to quaternary structure, acetyl-CoA carboxylase is a heterohexamer composed of biotin carboxyl carrier protein (AccB), biotin carboxylase (AccC) and two subunits each of ACCase subunit alpha (AccA) and ACCase subunit beta (AccD). It depends on Zn(2+) as a cofactor.

Its subcellular location is the cytoplasm. The catalysed reaction is N(6)-carboxybiotinyl-L-lysyl-[protein] + acetyl-CoA = N(6)-biotinyl-L-lysyl-[protein] + malonyl-CoA. The protein operates within lipid metabolism; malonyl-CoA biosynthesis; malonyl-CoA from acetyl-CoA: step 1/1. In terms of biological role, component of the acetyl coenzyme A carboxylase (ACC) complex. Biotin carboxylase (BC) catalyzes the carboxylation of biotin on its carrier protein (BCCP) and then the CO(2) group is transferred by the transcarboxylase to acetyl-CoA to form malonyl-CoA. In Wolinella succinogenes (strain ATCC 29543 / DSM 1740 / CCUG 13145 / JCM 31913 / LMG 7466 / NCTC 11488 / FDC 602W) (Vibrio succinogenes), this protein is Acetyl-coenzyme A carboxylase carboxyl transferase subunit beta.